Reading from the N-terminus, the 437-residue chain is Glutamyl-tRNA reductase (437 aa).

Substrate-binding positions include 49 to 52 (TCNR), Ser-109, 114 to 116 (EVQ), and Gln-120. Residue Cys-50 is the Nucleophile of the active site. Residue 189–194 (GAGDTA) coordinates NADP(+).

The protein belongs to the glutamyl-tRNA reductase family. In terms of assembly, homodimer.

It carries out the reaction (S)-4-amino-5-oxopentanoate + tRNA(Glu) + NADP(+) = L-glutamyl-tRNA(Glu) + NADPH + H(+). The protein operates within porphyrin-containing compound metabolism; protoporphyrin-IX biosynthesis; 5-aminolevulinate from L-glutamyl-tRNA(Glu): step 1/2. It participates in porphyrin-containing compound metabolism; chlorophyll biosynthesis. Catalyzes the NADPH-dependent reduction of glutamyl-tRNA(Glu) to glutamate 1-semialdehyde (GSA). In Chloroherpeton thalassium (strain ATCC 35110 / GB-78), this protein is Glutamyl-tRNA reductase.